The sequence spans 205 residues: Thiamine-phosphate synthase (205 aa).

4-amino-2-methyl-5-(diphosphooxymethyl)pyrimidine is bound by residues 34-38 (QLRCK) and asparagine 66. Residues aspartate 67 and aspartate 86 each coordinate Mg(2+). Serine 105 is a binding site for 4-amino-2-methyl-5-(diphosphooxymethyl)pyrimidine. 131–133 (TTT) lines the 2-[(2R,5Z)-2-carboxy-4-methylthiazol-5(2H)-ylidene]ethyl phosphate pocket. Lysine 134 serves as a coordination point for 4-amino-2-methyl-5-(diphosphooxymethyl)pyrimidine. Position 163 (glycine 163) interacts with 2-[(2R,5Z)-2-carboxy-4-methylthiazol-5(2H)-ylidene]ethyl phosphate.

Belongs to the thiamine-phosphate synthase family. The cofactor is Mg(2+).

The catalysed reaction is 2-[(2R,5Z)-2-carboxy-4-methylthiazol-5(2H)-ylidene]ethyl phosphate + 4-amino-2-methyl-5-(diphosphooxymethyl)pyrimidine + 2 H(+) = thiamine phosphate + CO2 + diphosphate. The enzyme catalyses 2-(2-carboxy-4-methylthiazol-5-yl)ethyl phosphate + 4-amino-2-methyl-5-(diphosphooxymethyl)pyrimidine + 2 H(+) = thiamine phosphate + CO2 + diphosphate. It catalyses the reaction 4-methyl-5-(2-phosphooxyethyl)-thiazole + 4-amino-2-methyl-5-(diphosphooxymethyl)pyrimidine + H(+) = thiamine phosphate + diphosphate. It participates in cofactor biosynthesis; thiamine diphosphate biosynthesis; thiamine phosphate from 4-amino-2-methyl-5-diphosphomethylpyrimidine and 4-methyl-5-(2-phosphoethyl)-thiazole: step 1/1. Condenses 4-methyl-5-(beta-hydroxyethyl)thiazole monophosphate (THZ-P) and 2-methyl-4-amino-5-hydroxymethyl pyrimidine pyrophosphate (HMP-PP) to form thiamine monophosphate (TMP). The polypeptide is Thiamine-phosphate synthase (Neisseria gonorrhoeae (strain ATCC 700825 / FA 1090)).